We begin with the raw amino-acid sequence, 429 residues long: Probable imidazolonepropionase (429 aa).

Residues Y161 and H194 each coordinate 4-imidazolone-5-propanoate. Residue Y161 participates in N-formimidoyl-L-glutamate binding. Residue H262 coordinates Fe(3+). H262 serves as a coordination point for Zn(2+). E265 contributes to the 4-imidazolone-5-propanoate binding site. Position 336 (D336) interacts with Fe(3+). D336 lines the Zn(2+) pocket. Residue N338 coordinates N-formimidoyl-L-glutamate.

The protein belongs to the metallo-dependent hydrolases superfamily. HutI family. Zn(2+) serves as cofactor. It depends on Fe(3+) as a cofactor.

It catalyses the reaction 4-imidazolone-5-propanoate + H2O = N-formimidoyl-L-glutamate. Its pathway is amino-acid degradation; L-histidine degradation into L-glutamate; N-formimidoyl-L-glutamate from L-histidine: step 3/3. This Nematostella vectensis (Starlet sea anemone) protein is Probable imidazolonepropionase (amdhd1).